The chain runs to 201 residues: 3-isopropylmalate dehydratase small subunit (201 aa).

Belongs to the LeuD family. LeuD type 1 subfamily. In terms of assembly, heterodimer of LeuC and LeuD.

It catalyses the reaction (2R,3S)-3-isopropylmalate = (2S)-2-isopropylmalate. The protein operates within amino-acid biosynthesis; L-leucine biosynthesis; L-leucine from 3-methyl-2-oxobutanoate: step 2/4. In terms of biological role, catalyzes the isomerization between 2-isopropylmalate and 3-isopropylmalate, via the formation of 2-isopropylmaleate. This Chloroflexus aurantiacus (strain ATCC 29366 / DSM 635 / J-10-fl) protein is 3-isopropylmalate dehydratase small subunit.